Reading from the N-terminus, the 147-residue chain is D(1B) dopamine receptor (147 aa).

Residues 1-12 (SILISFPVQLNW) form a helical membrane-spanning segment. The Extracellular segment spans residues 13–55 (HRDQAGSWGGLDLTNNLANWTPWEEDVWEPDVRAENCDSSLNR). Asn-54 carries an N-linked (GlcNAc...) asparagine glycan. A helical transmembrane segment spans residues 56-78 (TYAISSSLVSFYIPVAIMIVTYT). Residues 79 to 128 (RIYRIAQVQIRRISSLERAAEHAQSCRSSAACAPDTSLRASIKKETKVLK) lie on the Cytoplasmic side of the membrane. A helical membrane pass occupies residues 129-147 (TLSVIMGVFVCCWLPFFIL).

Belongs to the G-protein coupled receptor 1 family.

It localises to the cell membrane. In terms of biological role, dopamine receptor whose activity is mediated by G proteins which activate adenylyl cyclase. The polypeptide is D(1B) dopamine receptor (DRD5) (Macaca mulatta (Rhesus macaque)).